Here is a 469-residue protein sequence, read N- to C-terminus: Pancreatic lipase-related protein 2 (469 aa).

Positions 1–17 (MLPSWTIGLLLLATVRG) are cleaved as a signal peptide. Cys-21 and Cys-27 are disulfide-bonded. Asn-71 carries an N-linked (GlcNAc...) asparagine glycan. The interval 93–105 (IHGFIDDGDSGWP) is required for galactolipase activity. A disulfide bond links Cys-109 and Cys-120. Ser-171 acts as the Nucleophile in catalysis. The active-site Charge relay system is the Asp-195. Residues Glu-206, Arg-209, Asp-211, and Asp-214 each coordinate Ca(2+). An intrachain disulfide couples Cys-256 to Cys-280. The tract at residues 257–279 (QKNILSTIIDINGIWQGIQDFVA) is required for galactolipase activity. His-282 serves as the catalytic Charge relay system. 2 cysteine pairs are disulfide-bonded: Cys-304/Cys-315 and Cys-318/Cys-323. N-linked (GlcNAc...) asparagine glycosylation is found at Asn-353, Asn-399, and Asn-455. In terms of domain architecture, PLAT spans 357-469 (WRYRVSVTLA…ENALQTLYPC (113 aa)). A disulfide bridge connects residues Cys-453 and Cys-469.

It belongs to the AB hydrolase superfamily. Lipase family.

It is found in the secreted. It localises to the zymogen granule membrane. The protein localises to the cell projection. The protein resides in the neuron projection. The enzyme catalyses a triacylglycerol + H2O = a diacylglycerol + a fatty acid + H(+). It catalyses the reaction a 1,2-diacyl-3-O-(beta-D-galactosyl)-sn-glycerol + 2 H2O = 3-beta-D-galactosyl-sn-glycerol + 2 a fatty acid + 2 H(+). It carries out the reaction 1,2,3-tri-(9Z-octadecenoyl)-glycerol + H2O = di-(9Z)-octadecenoylglycerol + (9Z)-octadecenoate + H(+). The catalysed reaction is di-(9Z)-octadecenoylglycerol + H2O = (9Z-octadecenoyl)-glycerol + (9Z)-octadecenoate + H(+). The enzyme catalyses (9Z-octadecenoyl)-glycerol + H2O = glycerol + (9Z)-octadecenoate + H(+). It catalyses the reaction 1-(9Z-octadecenoyl)-glycerol + H2O = glycerol + (9Z)-octadecenoate + H(+). It carries out the reaction 1,2,3-tripropanoylglycerol + H2O = dipropanoylglycerol + propanoate + H(+). The catalysed reaction is 1,2,3-tributanoylglycerol + H2O = dibutanoylglycerol + butanoate + H(+). The enzyme catalyses 1,2,3-trioctanoylglycerol + H2O = dioctanoylglycerol + octanoate + H(+). It catalyses the reaction 1,2-didecanoylglycerol + H2O = decanoylglycerol + decanoate + H(+). It carries out the reaction long chain 1,2-diacyl-3-O-beta-D-galactosyl-sn-glycerol + H2O = long chain acyl-3-O-beta-D-galactosyl-sn-glycerol + a fatty acid + H(+). The catalysed reaction is 1,2-dioctanoyl-3-O-beta-D-galactosyl-sn-glycerol + H2O = octanoyl-3-(beta-D-galactosyl)-sn-glycerol + octanoate + H(+). The enzyme catalyses 1,2-didodecanoyl-3-beta-D-galactosyl-sn-glycerol + H2O = dodecanoyl-3-beta-D-galactosyl-sn-glycerol + dodecanoate + H(+). It catalyses the reaction 1-beta-D-galactosyl-2,3-didodecanoyl-sn-glycerol + H2O = 1-beta-D-galactosyl-dodecanoyl-sn-glycerol + dodecanoate + H(+). It carries out the reaction a 1,2-diacyl-3-O-[alpha-D-galactosyl-(1-&gt;6)-beta-D-galactosyl]-sn-glycerol + H2O = acyl-3-O-[alpha-D-galactosyl-(1-&gt;6)-beta-D-galactosyl]-sn-glycerol + a fatty acid + H(+). The catalysed reaction is long chain 1,2-diacyl-3-O-[alpha-D-galactosyl-(1-&gt;6)-beta-D-galactosyl]-sn-glycerol + H2O = long chain acyl-3-O-[alpha-D-galactosyl-(1-&gt;6)-beta-D-galactosyl]-sn-glycerol + a fatty acid + H(+). The enzyme catalyses 1,2-dioctanoyl-3-O-[alpha-D-galactosyl-(1-&gt;6)-beta-D-galactosyl]-sn-glycerol + H2O = octanoyl-3-O-[alpha-D-galactosyl-(1-&gt;6)-beta-D-galactosyl]-sn-glycerol + octanoate + H(+). It catalyses the reaction 1,2-didodecanoyl-3-O-[alpha-D-galactosyl-(1-&gt;6)-beta-D-galactosyl]-sn-glycerol + H2O = dodecanoyl-3-O-[alpha-D-galactosyl-(1-&gt;6)-beta-D-galactosyl]-sn-glycerol + dodecanoate + H(+). It carries out the reaction a 1,2-diacyl-sn-glycero-3-phosphocholine + H2O = a monoacyl-sn-glycero-3-phosphocholine + a fatty acid + H(+). It functions in the pathway glycerolipid metabolism; triacylglycerol degradation. The protein operates within glycolipid metabolism. Functionally, lipase that primarily hydrolyzes triglycerides and galactosylglycerides. In neonates, may play a major role in pancreatic digestion of dietary fats such as milk fat globules enriched in long-chain triglycerides. Hydrolyzes short-, medium- and long-chain fatty acyls in triglycerides without apparent positional specificity. Can completely deacylate triacylglycerols. When the liver matures and bile salt synthesis increases, likely functions mainly as a galactolipase and monoacylglycerol lipase. Hydrolyzes monogalactosyldiglycerols (MGDG) and digalactosyldiacylglycerols (DGDG) present in a plant-based diet, releasing long-chain polyunsaturated fatty acids. Hydrolyzes medium- and long-chain fatty acyls in galactolipids. May act together with LIPF to hydrolyze partially digested triglycerides. Hydrolyzes long-chain monoglycerides with high efficiency. In cytotoxic T cells, contributes to perforin-dependent cell lysis, but is unlikely to mediate direct cytotoxicity. Also has low phospholipase activity. In neurons, required for the localization of the phospholipid 1-oleoyl-2-palmitoyl-PC (OPPC) to neurite tips through acyl chain remodeling of membrane phospholipids. The resulting OPPC-rich lipid membrane domain recruits the t-SNARE protein STX4 by selectively interacting with the STX4 transmembrane domain and this promotes surface expression of the dopamine transporter SLC6A3/DAT at neurite tips by facilitating fusion of SLC6A3-containing transport vesicles with the plasma membrane. The polypeptide is Pancreatic lipase-related protein 2 (Bos taurus (Bovine)).